The following is a 242-amino-acid chain: Tryptophan synthase alpha chain (242 aa).

Active-site proton acceptor residues include Glu31 and Asp42.

This sequence belongs to the TrpA family. In terms of assembly, tetramer of two alpha and two beta chains.

It catalyses the reaction (1S,2R)-1-C-(indol-3-yl)glycerol 3-phosphate + L-serine = D-glyceraldehyde 3-phosphate + L-tryptophan + H2O. Its pathway is amino-acid biosynthesis; L-tryptophan biosynthesis; L-tryptophan from chorismate: step 5/5. The alpha subunit is responsible for the aldol cleavage of indoleglycerol phosphate to indole and glyceraldehyde 3-phosphate. The sequence is that of Tryptophan synthase alpha chain from Staphylococcus aureus (strain Mu3 / ATCC 700698).